The following is a 242-amino-acid chain: Small ribosomal subunit protein uS2 (242 aa).

This sequence belongs to the universal ribosomal protein uS2 family.

This Shewanella oneidensis (strain ATCC 700550 / JCM 31522 / CIP 106686 / LMG 19005 / NCIMB 14063 / MR-1) protein is Small ribosomal subunit protein uS2.